The following is a 347-amino-acid chain: NADH-ubiquinone oxidoreductase chain 2 (347 aa).

11 helical membrane passes run 3–23, 25–45, 67–87, 96–116, 122–142, 145–165, 178–198, 200–220, 237–257, 274–294, and 325–345; these read PIIL…VMIS, HWLL…PIMM, SMLL…WTVM, MLMT…FWVP, IPLS…MSVL, ILPS…ITIG, IMAY…LYNP, MTLL…TLFM, APIM…LPPL, DSII…YFYM, and LLPT…ILSI.

It belongs to the complex I subunit 2 family. Core subunit of respiratory chain NADH dehydrogenase (Complex I) which is composed of 45 different subunits. Interacts with TMEM242.

It is found in the mitochondrion inner membrane. The enzyme catalyses a ubiquinone + NADH + 5 H(+)(in) = a ubiquinol + NAD(+) + 4 H(+)(out). Core subunit of the mitochondrial membrane respiratory chain NADH dehydrogenase (Complex I) which catalyzes electron transfer from NADH through the respiratory chain, using ubiquinone as an electron acceptor. Essential for the catalytic activity and assembly of complex I. The polypeptide is NADH-ubiquinone oxidoreductase chain 2 (Ovis aries (Sheep)).